The sequence spans 86 residues: Electron transfer flavoprotein regulatory factor 1 (86 aa).

The protein belongs to the complex I LYR family. As to quaternary structure, homotetramer. Interacts with NDUFAB1. Interacts with ETFA. Interacts with ETFB.

The protein localises to the mitochondrion. In terms of biological role, acts as a regulator of the electron transfer flavoprotein by promoting the removal of flavin from the ETF holoenzyme (composed of ETFA and ETFB). This is Electron transfer flavoprotein regulatory factor 1 from Mus musculus (Mouse).